The primary structure comprises 313 residues: MKRENQSSVSEFLLLDLPIWPEQQAVFFTLFLGMYLITVLGNLLIILLIRLDSHLHTPMFFFLSHLALTDISLSSVTVPKMLLSMQTQDQSILYAGCVTQMYFFIFFTDLDNFLLTSMAYDRYVAICHPLRYTTIMKEGLCNLLVTVSWILSCTNALSHTLLLAQLSFCADNTIPHFFCDLVALLKLSCSDISLNELVIFTVGQAVITLPLICILISYGHIGVTILKAPSTKGIFKALSTCGSHLSVVSLYYGTIIGLYFLPSSSASSDKDVIASVMYTVITPLLNPFIYSLRNRDIKGALERLFNRATVLSQ.

The Extracellular portion of the chain corresponds to 1-25 (MKRENQSSVSEFLLLDLPIWPEQQA). Residue Asn5 is glycosylated (N-linked (GlcNAc...) asparagine). A helical membrane pass occupies residues 26–49 (VFFTLFLGMYLITVLGNLLIILLI). Residues 50 to 57 (RLDSHLHT) lie on the Cytoplasmic side of the membrane. A helical transmembrane segment spans residues 58 to 79 (PMFFFLSHLALTDISLSSVTVP). Over 80-100 (KMLLSMQTQDQSILYAGCVTQ) the chain is Extracellular. Cys97 and Cys189 are disulfide-bonded. Residues 101 to 120 (MYFFIFFTDLDNFLLTSMAY) traverse the membrane as a helical segment. Residues 121–139 (DRYVAICHPLRYTTIMKEG) lie on the Cytoplasmic side of the membrane. A helical membrane pass occupies residues 140–158 (LCNLLVTVSWILSCTNALS). Residues 159–195 (HTLLLAQLSFCADNTIPHFFCDLVALLKLSCSDISLN) are Extracellular-facing. A helical transmembrane segment spans residues 196–219 (ELVIFTVGQAVITLPLICILISYG). The Cytoplasmic segment spans residues 220-236 (HIGVTILKAPSTKGIFK). A helical transmembrane segment spans residues 237-259 (ALSTCGSHLSVVSLYYGTIIGLY). Residues 260 to 272 (FLPSSSASSDKDV) are Extracellular-facing. A helical transmembrane segment spans residues 273–292 (IASVMYTVITPLLNPFIYSL). The Cytoplasmic segment spans residues 293–313 (RNRDIKGALERLFNRATVLSQ).

Belongs to the G-protein coupled receptor 1 family.

It is found in the cell membrane. Odorant receptor. The chain is Olfactory receptor 1J4 (OR1J4) from Homo sapiens (Human).